Consider the following 360-residue polypeptide: POU domain, class 5, transcription factor 1 (360 aa).

2 disordered regions span residues 1-51 (MAGH…GPGV) and 88-114 (GGLE…SPEP). Positions 4-12 (HLTSDFAFS) match the 9aaTAD motif. Ser111 carries the post-translational modification Phosphoserine; by MAPK. Lys123 participates in a covalent cross-link: Glycyl lysine isopeptide (Lys-Gly) (interchain with G-Cter in SUMO). The POU-specific domain occupies 138–212 (DIKALQKELE…LLQKWVEEAD (75 aa)). Residues Arg157 and Gln164 each contribute to the DNA site. DNA-binding regions lie at residues 180-186 (SQTTICR) and 193-196 (SFKN). Positions 230–289 (RKRKRTSIENRVRGNLENLFLQCPKPTLQQISHIAQQLGLEKDVVRVWFCNRRQKGKRSS) form a DNA-binding region, homeobox. Thr235 bears the Phosphothreonine mark. Ser236, Ser289, Ser290, and Ser355 each carry phosphoserine.

The protein belongs to the POU transcription factor family. Class-5 subfamily. In terms of assembly, interacts with PKM. Interacts with WWP2. Interacts with UBE2I and ZSCAN10. Interacts with PCGF1. Interacts with ESRRB; recruits ESRRB near the POU5F1-SOX2 element in the NANOG proximal promoter; the interaction is DNA independent. Interacts with ZNF322. Interacts with MAPK8 and MAPK9; the interaction allows MAPK8 and MAPK9 to phosphorylate POU5F1 on Ser-355. Interacts (when phosphorylated on Ser-355) with FBXW8. Interacts with FBXW4. Interacts with SOX2 and SOX15; binds synergistically with either SOX2 or SOX15 to DNA. Interacts with DDX56. Post-translationally, sumoylation enhances the protein stability, DNA binding and transactivation activity. Sumoylation is required for enhanced YES1 expression. Ubiquitinated; undergoes 'Lys-63'-linked polyubiquitination by WWP2 leading to proteasomal degradation. In terms of processing, ERK1/2-mediated phosphorylation at Ser-111 promotes nuclear exclusion and proteasomal degradation. Phosphorylation at Thr-235 and Ser-236 decrease DNA-binding and alters ability to activate transcription.

The protein localises to the cytoplasm. Its subcellular location is the nucleus. Its function is as follows. Transcription factor that binds to the octamer motif (5'-ATTTGCAT-3'). Forms a trimeric complex with SOX2 or SOX15 on DNA and controls the expression of a number of genes involved in embryonic development such as YES1, FGF4, UTF1 and ZFP206. Critical for early embryogenesis and for embryonic stem cell pluripotency. In Pan troglodytes (Chimpanzee), this protein is POU domain, class 5, transcription factor 1 (POU5F1).